We begin with the raw amino-acid sequence, 284 residues long: Diaminopimelate epimerase (284 aa).

3 residues coordinate substrate: Asn20, Gln53, and Asn73. The active-site Proton donor is Cys82. Substrate is bound by residues 83–84, Asn167, Asn200, and 218–219; these read GN and ER. Cys227 acts as the Proton acceptor in catalysis. Position 228–229 (228–229) interacts with substrate; that stretch reads GS.

Belongs to the diaminopimelate epimerase family. Homodimer.

It is found in the cytoplasm. The enzyme catalyses (2S,6S)-2,6-diaminopimelate = meso-2,6-diaminopimelate. It participates in amino-acid biosynthesis; L-lysine biosynthesis via DAP pathway; DL-2,6-diaminopimelate from LL-2,6-diaminopimelate: step 1/1. Functionally, catalyzes the stereoinversion of LL-2,6-diaminopimelate (L,L-DAP) to meso-diaminopimelate (meso-DAP), a precursor of L-lysine and an essential component of the bacterial peptidoglycan. The polypeptide is Diaminopimelate epimerase (Xanthomonas campestris pv. campestris (strain ATCC 33913 / DSM 3586 / NCPPB 528 / LMG 568 / P 25)).